Reading from the N-terminus, the 257-residue chain is Undecaprenyl-diphosphatase (257 aa).

Helical transmembrane passes span 42-62 (YVLF…YMFL), 76-96 (IFHI…LKPI), 103-123 (PQYL…GVYF), 136-156 (CLTI…RSGA), 172-192 (IQFS…LEIW), 209-229 (QFLT…WAVI), and 237-257 (WVYF…YFQM).

This sequence belongs to the UppP family.

The protein resides in the cell inner membrane. The enzyme catalyses di-trans,octa-cis-undecaprenyl diphosphate + H2O = di-trans,octa-cis-undecaprenyl phosphate + phosphate + H(+). Catalyzes the dephosphorylation of undecaprenyl diphosphate (UPP). Confers resistance to bacitracin. This chain is Undecaprenyl-diphosphatase, found in Protochlamydia amoebophila (strain UWE25).